Consider the following 329-residue polypeptide: GTP 3',8-cyclase (329 aa).

One can recognise a Radical SAM core domain in the interval Ala8 to Ala234. Residue Arg17 participates in GTP binding. [4Fe-4S] cluster-binding residues include Cys24 and Cys28. Residue Tyr30 coordinates S-adenosyl-L-methionine. Position 31 (Cys31) interacts with [4Fe-4S] cluster. Residue Arg68 participates in GTP binding. Position 72 (Gly72) interacts with S-adenosyl-L-methionine. Thr99 contributes to the GTP binding site. Ser123 is an S-adenosyl-L-methionine binding site. Lys160 provides a ligand contact to GTP. Met194 is a binding site for S-adenosyl-L-methionine. Cys257 and Cys260 together coordinate [4Fe-4S] cluster. GTP is bound at residue Arg262–Arg264. Position 274 (Cys274) interacts with [4Fe-4S] cluster.

The protein belongs to the radical SAM superfamily. MoaA family. In terms of assembly, monomer and homodimer. [4Fe-4S] cluster is required as a cofactor.

It carries out the reaction GTP + AH2 + S-adenosyl-L-methionine = (8S)-3',8-cyclo-7,8-dihydroguanosine 5'-triphosphate + 5'-deoxyadenosine + L-methionine + A + H(+). The protein operates within cofactor biosynthesis; molybdopterin biosynthesis. Functionally, catalyzes the cyclization of GTP to (8S)-3',8-cyclo-7,8-dihydroguanosine 5'-triphosphate. This chain is GTP 3',8-cyclase, found in Salmonella heidelberg (strain SL476).